Here is a 221-residue protein sequence, read N- to C-terminus: MELARYIDHTALKAETTKDQITTLCAEALEYKFASVCVNPTWVKYAAEQLKSDDDVKVCTVIGFPLGANTPEVKAFETKDAIANGADEVDMVINIAALKDADYDLVERDIRAVVEAANGTLVKVIFETCMLTKEEIKKAAELSVKAGADFVKTSTGFSTGGATVEDIRLMRETVGPDIGVKASGGVRDFEGAKAMIDAGATRIGASAGIAIVTGGRSDSDY.

The active-site Proton donor/acceptor is the aspartate 90. Lysine 152 serves as the catalytic Schiff-base intermediate with acetaldehyde. The active-site Proton donor/acceptor is the lysine 181.

Belongs to the DeoC/FbaB aldolase family. DeoC type 1 subfamily.

It localises to the cytoplasm. The enzyme catalyses 2-deoxy-D-ribose 5-phosphate = D-glyceraldehyde 3-phosphate + acetaldehyde. The protein operates within carbohydrate degradation; 2-deoxy-D-ribose 1-phosphate degradation; D-glyceraldehyde 3-phosphate and acetaldehyde from 2-deoxy-alpha-D-ribose 1-phosphate: step 2/2. Catalyzes a reversible aldol reaction between acetaldehyde and D-glyceraldehyde 3-phosphate to generate 2-deoxy-D-ribose 5-phosphate. In Exiguobacterium sp. (strain ATCC BAA-1283 / AT1b), this protein is Deoxyribose-phosphate aldolase.